Consider the following 365-residue polypeptide: 3-dehydroquinate synthase (365 aa).

NAD(+) is bound by residues 107–111 (GVIGD), 131–132 (TT), lysine 144, and lysine 153. Residues glutamate 186, histidine 251, and histidine 268 each contribute to the Zn(2+) site.

It belongs to the sugar phosphate cyclases superfamily. Dehydroquinate synthase family. The cofactor is Co(2+). It depends on Zn(2+) as a cofactor. NAD(+) is required as a cofactor.

It is found in the cytoplasm. It catalyses the reaction 7-phospho-2-dehydro-3-deoxy-D-arabino-heptonate = 3-dehydroquinate + phosphate. It participates in metabolic intermediate biosynthesis; chorismate biosynthesis; chorismate from D-erythrose 4-phosphate and phosphoenolpyruvate: step 2/7. In terms of biological role, catalyzes the conversion of 3-deoxy-D-arabino-heptulosonate 7-phosphate (DAHP) to dehydroquinate (DHQ). This is 3-dehydroquinate synthase from Picosynechococcus sp. (strain ATCC 27264 / PCC 7002 / PR-6) (Agmenellum quadruplicatum).